The following is a 528-amino-acid chain: Nucleolar GTP-binding protein 1 (528 aa).

In terms of domain architecture, OBG-type G spans 168–335 (RTLLVCGFPN…VKAMACDLLL (168 aa)). Residues 174–181 (GFPNVGKS), 220–224 (DTPGI), and 287–290 (SKSD) contribute to the GTP site. The tract at residues 470–528 (PDSWKHRSRNSGGDIAVHVRRDSKTQVAQPPRLPSKKKARFDDKHYYDRKPKHLYRGRK) is disordered. The span at 509–518 (RFDDKHYYDR) shows a compositional bias: basic and acidic residues. Positions 519–528 (KPKHLYRGRK) are enriched in basic residues.

This sequence belongs to the TRAFAC class OBG-HflX-like GTPase superfamily. OBG GTPase family. NOG subfamily.

The protein resides in the nucleus. The protein localises to the nucleolus. In terms of biological role, involved in the biogenesis of the 60S ribosomal subunit. In Encephalitozoon cuniculi (strain GB-M1) (Microsporidian parasite), this protein is Nucleolar GTP-binding protein 1 (NOG1).